Reading from the N-terminus, the 615-residue chain is Chaperone protein DnaK (615 aa).

T175 is modified (phosphothreonine; by autocatalysis). The interval S573–K615 is disordered. A compositionally biased stretch (low complexity) spans A580–Q594. A compositionally biased stretch (basic and acidic residues) spans G597–K609.

Belongs to the heat shock protein 70 family.

Its function is as follows. Acts as a chaperone. This chain is Chaperone protein DnaK, found in Clostridioides difficile (strain 630) (Peptoclostridium difficile).